The primary structure comprises 706 residues: Cyclic nucleotide-gated channel alpha-3 (706 aa).

The Cytoplasmic segment spans residues 1 to 189 (MAKISTQYSH…MDPSSNMYYH (189 aa)). Positions 113-177 (RESHVQFNVG…PKKEEKKKDS (65 aa)) are disordered. The span at 147-177 (SEKDDKAKKEEKEKKEEKKENPKKEEKKKDS) shows a compositional bias: basic and acidic residues. A helical membrane pass occupies residues 190–211 (WLTVIAVPVFYNWCLLVCRACF). The Extracellular segment spans residues 212-217 (DELQSE). A helical transmembrane segment spans residues 218–238 (HLMLWLVLDYSADILYGMDML). Over 239–265 (VRARTGFLEQGLMVMDASRLWKHYTQT) the chain is Cytoplasmic. A helical membrane pass occupies residues 266–285 (LHFKLDVLSLVPTDLAYFKL). Over 286 to 289 (GMNY) the chain is Extracellular. Residues 290-307 (PELRFNRLLKLARLFEFF) form a helical membrane-spanning segment. Residues 308 to 317 (DRTETRTNYP) lie on the Cytoplasmic side of the membrane. Residues 317–425 (PNMFRIGNLV…GNVGSMISNM (109 aa)) are ion conduction pathway. A helical membrane pass occupies residues 318 to 340 (NMFRIGNLVLYILIIIHWNACIY). The Extracellular segment spans residues 341 to 366 (FAISKFIGFGTDSWVYPNVSNPEYGR). The N-linked (GalNAc...) asparagine glycan is linked to Asn-358. 2 helical membrane-spanning segments follow: residues 367–397 (LSRK…DEEY) and 398–422 (LFVV…GSMI). The segment at 384-387 (TIGE) is selectivity filter. At 423–706 (SNMNASRAEF…DAPQTEASQP (284 aa)) the chain is on the cytoplasmic side. Positions 427-504 (ASRAEFQAKI…TLRKVRIFQD (78 aa)) are C-linker. A cyclic nucleotide-binding domain region spans residues 507–627 (AGLLVELVLK…EEKGRQILMK (121 aa)). 6 residues coordinate 3',5'-cyclic GMP: Gly-567, Glu-568, Ser-570, Arg-583, Thr-584, and Asp-628. The stretch at 645–688 (IEEKVEHLETSLDSLQTRFARLLAEYNATQMKVKQRLSQLESQV) forms a coiled coil. The disordered stretch occupies residues 685-706 (ESQVKMGLPPDGDAPQTEASQP).

The protein belongs to the cyclic nucleotide-gated cation channel (TC 1.A.1.5) family. CNGA3 subfamily. Forms heterotetrameric channels composed of CNGA3 and CNGB3 subunits with 3:1 stoichiometry. In terms of tissue distribution, testis, kidney, retinal cone (at protein level) and heart.

It localises to the cell membrane. The enzyme catalyses Ca(2+)(in) = Ca(2+)(out). It carries out the reaction Na(+)(in) = Na(+)(out). The catalysed reaction is K(+)(in) = K(+)(out). It catalyses the reaction NH4(+)(in) = NH4(+)(out). The enzyme catalyses Rb(+)(in) = Rb(+)(out). It carries out the reaction Li(+)(in) = Li(+)(out). The catalysed reaction is Cs(+)(in) = Cs(+)(out). Its activity is regulated as follows. Ca(2+) influx is inhibited by extracellular Mg(2+) ions. In terms of biological role, pore-forming subunit of the cone cyclic nucleotide-gated channel. Mediates cone photoresponses at bright light converting transient changes in intracellular cGMP levels into electrical signals. In the dark, cGMP levels are high and keep the channel open enabling a steady inward current carried by Na(+) and Ca(2+) ions that leads to membrane depolarization and neurotransmitter release from synaptic terminals. Upon photon absorption cGMP levels decline leading to channel closure and membrane hyperpolarization that ultimately slows neurotransmitter release and signals the presence of light, the end point of the phototransduction cascade. Pore-forming subunit of the gustatory cyclic nucleotide-gated channel. In the taste buds, may sense oral extracellular pH and conduct ion currents that modulate the excitability of taste cells. Conducts cGMP- and cAMP-gated ion currents, with permeability for monovalent and divalent cations. In Bos taurus (Bovine), this protein is Cyclic nucleotide-gated channel alpha-3.